A 1180-amino-acid polypeptide reads, in one-letter code: Phosphatidylinositol 4-kinase (1180 aa).

The PIK helical domain maps to 1 to 206; the sequence is MNKISDTIII…SVYLHSPSTS (206 aa). 5 disordered regions span residues 15 to 84, 257 to 327, 355 to 391, 768 to 799, and 832 to 894; these read NEDE…KHKE, ENDH…ENDN, TSPIKDDMENNNNNNNNNNNNNNNNNNNNNINNNNIN, TISNSSDSCTTETTTTSPVATSPTLPINIPHS, and AISP…SPFG. The segment covering 38–74 has biased composition (low complexity); that stretch reads NNNNNNILTNVNNNKNNTITSSGGSDSSSSSSNNNNN. Residues 75–84 are compositionally biased toward basic residues; that stretch reads KIKKSKKHKE. Residues 257–270 are compositionally biased toward basic and acidic residues; the sequence is ENDHHIENDPKKDI. 4 stretches are compositionally biased toward low complexity: residues 271-325, 364-391, 768-793, and 835-879; these read NSNN…SGEN, NNNNNNNNNNNNNNNNNNNNNINNNNIN, TISNSSDSCTTETTTTSPVATSPTLP, and PPSQ…SPTN. The 270-residue stretch at 895-1164 folds into the PI3K/PI4K catalytic domain; sequence ESWQEKIERY…LISYSIDHFK (270 aa). A G-loop region spans residues 901–907; that stretch reads IERYKKI. Residues 1030-1038 are catalytic loop; the sequence is QIKDRHNGN. Residues 1049-1073 are activation loop; that stretch reads HIDFGFILSNSPGNISFESAPFKLT.

The protein belongs to the PI3/PI4-kinase family. Type III PI4K subfamily.

The catalysed reaction is a 1,2-diacyl-sn-glycero-3-phospho-(1D-myo-inositol) + ATP = a 1,2-diacyl-sn-glycero-3-phospho-(1D-myo-inositol 4-phosphate) + ADP + H(+). In terms of biological role, acts on phosphatidylinositol (PtdIns) in the first committed step in the production of the second messenger inositol-1,4,5,-trisphosphate. The polypeptide is Phosphatidylinositol 4-kinase (pikD) (Dictyostelium discoideum (Social amoeba)).